Consider the following 107-residue polypeptide: Phosphoribosyl-ATP pyrophosphatase (107 aa).

The protein belongs to the PRA-PH family.

The protein resides in the cytoplasm. The catalysed reaction is 1-(5-phospho-beta-D-ribosyl)-ATP + H2O = 1-(5-phospho-beta-D-ribosyl)-5'-AMP + diphosphate + H(+). The protein operates within amino-acid biosynthesis; L-histidine biosynthesis; L-histidine from 5-phospho-alpha-D-ribose 1-diphosphate: step 2/9. The protein is Phosphoribosyl-ATP pyrophosphatase (hisE) of Clostridium tetani (strain Massachusetts / E88).